A 393-amino-acid chain; its full sequence is ATP phosphoribosyltransferase regulatory subunit (393 aa).

This sequence belongs to the class-II aminoacyl-tRNA synthetase family. HisZ subfamily. Heteromultimer composed of HisG and HisZ subunits.

The protein resides in the cytoplasm. Its pathway is amino-acid biosynthesis; L-histidine biosynthesis; L-histidine from 5-phospho-alpha-D-ribose 1-diphosphate: step 1/9. In terms of biological role, required for the first step of histidine biosynthesis. May allow the feedback regulation of ATP phosphoribosyltransferase activity by histidine. The sequence is that of ATP phosphoribosyltransferase regulatory subunit from Chromohalobacter salexigens (strain ATCC BAA-138 / DSM 3043 / CIP 106854 / NCIMB 13768 / 1H11).